The primary structure comprises 667 residues: Probable export ATP-binding/permease protein MacB (667 aa).

Positions 22 to 260 (LRLAGVSRRF…PVEEVQPAAE (239 aa)) constitute an ABC transporter domain. 58-65 (GASGSGKS) lines the ATP pocket. The next 4 membrane-spanning stretches (helical) occupy residues 292 to 312 (LLTM…SAIG), 540 to 560 (LTLL…IGVM), 601 to 621 (IGGV…ALFV), and 630 to 650 (LGSI…FGFV).

Belongs to the ABC transporter superfamily. Macrolide exporter (TC 3.A.1.122) family. Probably part of a tripartite efflux system, which is composed of an inner membrane transporter, a periplasmic membrane fusion protein, and an outer membrane component.

It is found in the cell inner membrane. Its function is as follows. Probably part of a tripartite efflux system. This Pseudomonas entomophila (strain L48) protein is Probable export ATP-binding/permease protein MacB.